Consider the following 307-residue polypeptide: Leucine-rich repeat-containing protein 25 (307 aa).

The first 20 residues, 1-20 (MGGPLMWALLLPLLLHQAGS), serve as a signal peptide directing secretion. Residues 21–168 (QTSSCSVLSG…SCPSGLTKIA (148 aa)) are Extracellular-facing. 2 N-linked (GlcNAc...) asparagine glycosylation sites follow: Asn44 and Asn56. LRR repeat units lie at residues 63 to 86 (SVQL…RDLE) and 87 to 110 (QLQL…XXGC). Asn95, Asn132, and Asn151 each carry an N-linked (GlcNAc...) asparagine glycan. Residues 169-189 (IGALAASGSLLLVLAIAGPVL) traverse the membrane as a helical segment. At 190 to 307 (AWRFCRHRMD…DDEEYVVPGR (118 aa)) the chain is on the cytoplasmic side. Residues 205–249 (TWASQDGSRSGSGRQPRYSSQGRRPKSPANTPPRSSTPDYENVFV) form a disordered region. Over residues 211-226 (GSRSGSGRQPRYSSQG) the composition is skewed to low complexity. Polar residues predominate over residues 232 to 243 (PANTPPRSSTPD). A Phosphotyrosine modification is found at Tyr286.

Interacts with RIGI. Interacts with SQSTM1. Interacts with p65/RELA; this interaction promotes the degradation of RELA through autophagy.

The protein resides in the membrane. It localises to the cytoplasm. Its function is as follows. Plays a role in the inhibition of RLR-mediated type I interferon signaling pathway by targeting RIGI for autophagic degradation. Interacts specifically with ISG15-associated RIGI to promote interaction between RIGI and the autophagic cargo receptor p62/SQSTM1 to mediate RIGI degradation via selective autophagy. Plays also a role in the inhibition of NF-kappa-B signaling pathway and inflammatory response by promoting the degradation of p65/RELA. This is Leucine-rich repeat-containing protein 25 (LRRC25) from Bos taurus (Bovine).